The following is a 1781-amino-acid chain: BCL-6 corepressor-like protein 1 (1781 aa).

2 disordered regions span residues 64-136 (AVGS…SHSR) and 337-362 (ASTP…GPPS). Polar residues-rich tracts occupy residues 66 to 82 (GSGS…NTTE) and 127 to 136 (PDSTEASHSR). A Phosphoserine modification is found at Ser490. Over residues 521–531 (SCTSPSSSTNS) the composition is skewed to low complexity. Disordered regions lie at residues 521 to 545 (SCTS…LADT), 561 to 616 (LLPA…EMPL), 733 to 777 (NRDP…STVK), 869 to 895 (PLGS…PEQD), and 933 to 960 (QPSS…TPKM). Residues 581-594 (TDQQTEGTSVTFSP) show a composition bias toward polar residues. Phosphoserine occurs at positions 593 and 607. A Glycyl lysine isopeptide (Lys-Gly) (interchain with G-Cter in SUMO2) cross-link involves residue Lys741. Position 1024 is a phosphoserine (Ser1024). Lys1087 participates in a covalent cross-link: Glycyl lysine isopeptide (Lys-Gly) (interchain with G-Cter in SUMO2). The tract at residues 1100–1484 (WQPDEETESL…PTARQIPPEA (385 aa)) is disordered. The span at 1116–1127 (CNKEKEIEEEPR) shows a compositional bias: basic and acidic residues. At Ser1162 the chain carries Phosphoserine. A compositionally biased stretch (basic residues) spans 1176 to 1185 (VRGKHKHRKP). Basic and acidic residues predominate over residues 1195 to 1213 (KRTDGHEEGSLEKKAKNSF). The span at 1222–1234 (STRTRSQSGSICS) shows a compositional bias: polar residues. Basic and acidic residues-rich tracts occupy residues 1271–1284 (TQRD…HAQD) and 1297–1307 (RAREMPWRTEA). Residues 1314-1324 (TNEEEEDDEEE) show a composition bias toward acidic residues. The segment covering 1328–1339 (KRKKRRRQKSRK) has biased composition (basic residues). A compositionally biased stretch (basic and acidic residues) spans 1350 to 1362 (EEQRRKGRADSKA). 2 stretches are compositionally biased toward polar residues: residues 1381 to 1394 (LLLS…SDSP) and 1437 to 1449 (RWSQ…SKSP). ANK repeat units follow at residues 1493 to 1523 (AGET…DVNH), 1527 to 1556 (AGYT…NVNC), and 1560 to 1589 (DGTR…DPTL). The interval 1664 to 1781 (DDFMFELSDK…SEVEYQSWSS (118 aa)) is PCGF Ub-like fold domain (PUFD); required for the interaction with the KDM2B-SKP1 heterodimeric complex.

The protein belongs to the BCOR family. As to quaternary structure, interacts with PCGF1, forming heterodimers. The PCGF1-BCORL1 heterodimeric complex interacts with the KDM2B-SKP1 heterodimeric complex to form a homotetrameric polycomb repression complex 1 (PRC1.1). Interacts with SKP1. Interacts with CTBP1, HDAC4, HDAC5 and HDAC7. As to expression, highly expressed in lung and testis.

It localises to the nucleus. Transcriptional corepressor. May specifically inhibit gene expression when recruited to promoter regions by sequence specific DNA-binding proteins such as BCL6. This repression may be mediated at least in part by histone deacetylase activities which can associate with this corepressor. The polypeptide is BCL-6 corepressor-like protein 1 (Bcorl1) (Mus musculus (Mouse)).